Consider the following 597-residue polypeptide: Arginine--tRNA ligase (597 aa).

Over residues 23–32 (QAAAARQASQ) the composition is skewed to low complexity. The disordered stretch occupies residues 23-43 (QAAAARQASQPLDPQLAPASK). Positions 137-147 (PNIAKEMHVGH) match the 'HIGH' region motif.

The protein belongs to the class-I aminoacyl-tRNA synthetase family. Monomer.

The protein resides in the cytoplasm. The catalysed reaction is tRNA(Arg) + L-arginine + ATP = L-arginyl-tRNA(Arg) + AMP + diphosphate. In Synechococcus sp. (strain WH7803), this protein is Arginine--tRNA ligase.